A 490-amino-acid chain; its full sequence is Trigger factor (490 aa).

The region spanning 162 to 243 is the PPIase FKBP-type domain; that stretch reads GDFVSIDLSA…VGSIKERELP (82 aa). The tract at residues 433–490 is disordered; it reads VDAVLGPRRGGADEAGAEAEAAEEKPAKAKKSADSEKTDKSEKAEKKSKKKSKDDDAE. Positions 454 to 477 are enriched in basic and acidic residues; the sequence is AEEKPAKAKKSADSEKTDKSEKAE.

Belongs to the FKBP-type PPIase family. Tig subfamily.

It is found in the cytoplasm. It carries out the reaction [protein]-peptidylproline (omega=180) = [protein]-peptidylproline (omega=0). Functionally, involved in protein export. Acts as a chaperone by maintaining the newly synthesized protein in an open conformation. Functions as a peptidyl-prolyl cis-trans isomerase. The chain is Trigger factor from Mycobacteroides abscessus (strain ATCC 19977 / DSM 44196 / CCUG 20993 / CIP 104536 / JCM 13569 / NCTC 13031 / TMC 1543 / L948) (Mycobacterium abscessus).